The primary structure comprises 324 residues: HTH-type transcriptional regulator CysB (324 aa).

Residues 1–59 (MKLQQLRYIVEVVNHNLNVSSTAEGLYTSQPGISKQVRMLEDELGIQIFSRSGKHLTQV) enclose the HTH lysR-type domain. The segment at residues 19–38 (VSSTAEGLYTSQPGISKQVR) is a DNA-binding region (H-T-H motif).

It belongs to the LysR transcriptional regulatory family. In terms of assembly, homotetramer.

Its subcellular location is the cytoplasm. In terms of biological role, this protein is a positive regulator of gene expression for the cysteine regulon. The inducer for CysB is N-acetylserine. This Escherichia coli O157:H7 protein is HTH-type transcriptional regulator CysB (cysB).